The following is a 300-amino-acid chain: MTDSTATRCGYVAIVGRPNVGKSTLLNHILGQKLAITSRKPQTTRHNMLGIKTEGAIQAIYVDTPGMHKSNEKALNRYMNKTASAALKDVDVVIFVVDRTKWTDEDQLVLERVQYVQGPVILAINKTDRIEDKAELMPHLTWLQEQLPNAEIVPVSAQQGHNLEALEGLIAKHLPENDHFFPEDQITDRSSRFLAAELVREKIMRQLGAELPYQITVEIEEFKQQGKTLHIHALIIVERDGQKKIIIGDKGERIKRIGMEARKDMELLFDSKVMLNLWVKVKGGWSDDERALRSLGYGDL.

Residues 8 to 176 (RCGYVAIVGR…EGLIAKHLPE (169 aa)) form the Era-type G domain. The segment at 16-23 (GRPNVGKS) is G1. Residue 16-23 (GRPNVGKS) participates in GTP binding. The interval 42–46 (QTTRH) is G2. The G3 stretch occupies residues 63 to 66 (DTPG). GTP contacts are provided by residues 63–67 (DTPGM) and 125–128 (NKTD). The tract at residues 125–128 (NKTD) is G4. Positions 155 to 157 (VSA) are G5. The KH type-2 domain maps to 199–283 (VREKIMRQLG…MLNLWVKVKG (85 aa)).

Belongs to the TRAFAC class TrmE-Era-EngA-EngB-Septin-like GTPase superfamily. Era GTPase family. Monomer.

It localises to the cytoplasm. Its subcellular location is the cell inner membrane. Functionally, an essential GTPase that binds both GDP and GTP, with rapid nucleotide exchange. Plays a role in 16S rRNA processing and 30S ribosomal subunit biogenesis and possibly also in cell cycle regulation and energy metabolism. The polypeptide is GTPase Era (Pseudomonas fluorescens (strain ATCC BAA-477 / NRRL B-23932 / Pf-5)).